A 462-amino-acid chain; its full sequence is tRNA modification GTPase MnmE (462 aa).

(6S)-5-formyl-5,6,7,8-tetrahydrofolate-binding residues include Arg23, Glu88, and Arg127. The region spanning Gly224 to Phe383 is the TrmE-type G domain. Asn234 provides a ligand contact to K(+). GTP contacts are provided by residues Asn234–Ser239, Thr253–Thr259, and Asp278–Gly281. Ser238 provides a ligand contact to Mg(2+). Positions 253, 255, and 258 each coordinate K(+). Thr259 lines the Mg(2+) pocket. Residue Lys462 coordinates (6S)-5-formyl-5,6,7,8-tetrahydrofolate.

It belongs to the TRAFAC class TrmE-Era-EngA-EngB-Septin-like GTPase superfamily. TrmE GTPase family. As to quaternary structure, homodimer. Heterotetramer of two MnmE and two MnmG subunits. The cofactor is K(+).

The protein resides in the cytoplasm. Its function is as follows. Exhibits a very high intrinsic GTPase hydrolysis rate. Involved in the addition of a carboxymethylaminomethyl (cmnm) group at the wobble position (U34) of certain tRNAs, forming tRNA-cmnm(5)s(2)U34. This is tRNA modification GTPase MnmE from Geobacillus thermodenitrificans (strain NG80-2).